Consider the following 289-residue polypeptide: ATP synthase subunit a (289 aa).

6 helical membrane passes run 43-63 (AFHVDTLGWSVALGLIFVLIF), 101-121 (SAVIAPLALTIFVWVFLMNAV), 160-180 (LSVFALIIFYSIKVKGIGGFI), 193-213 (IFVQALLIPVNFLLEFVTLIA), 232-252 (VFILIAVMFGSGLLWLSGLGI), and 259-279 (AVFHILIITLQAFIFMMLTIV).

Belongs to the ATPase A chain family. In terms of assembly, F-type ATPases have 2 components, CF(1) - the catalytic core - and CF(0) - the membrane proton channel. CF(1) has five subunits: alpha(3), beta(3), gamma(1), delta(1), epsilon(1). CF(0) has three main subunits: a(1), b(2) and c(9-12). The alpha and beta chains form an alternating ring which encloses part of the gamma chain. CF(1) is attached to CF(0) by a central stalk formed by the gamma and epsilon chains, while a peripheral stalk is formed by the delta and b chains.

It localises to the cell inner membrane. Key component of the proton channel; it plays a direct role in the translocation of protons across the membrane. The polypeptide is ATP synthase subunit a (Pseudomonas syringae pv. tomato (strain ATCC BAA-871 / DC3000)).